The sequence spans 103 residues: Large ribosomal subunit protein uL24 (103 aa).

This sequence belongs to the universal ribosomal protein uL24 family. In terms of assembly, part of the 50S ribosomal subunit.

In terms of biological role, one of two assembly initiator proteins, it binds directly to the 5'-end of the 23S rRNA, where it nucleates assembly of the 50S subunit. One of the proteins that surrounds the polypeptide exit tunnel on the outside of the subunit. The sequence is that of Large ribosomal subunit protein uL24 from Geobacillus stearothermophilus (Bacillus stearothermophilus).